A 198-amino-acid polypeptide reads, in one-letter code: Secreted RxLR effector protein PITG_22926 (198 aa).

An N-terminal signal peptide occupies residues 1-20 (MLRSFLLIVATVSLFGQCKP). The RxLR-dEER motif lies at 43 to 52 (RFLRTNDEER).

Belongs to the RxLR effector family. As to quaternary structure, interacts with host MAP3Kbeta2 in the nucleoplasm.

It localises to the secreted. Its subcellular location is the host nucleus. The protein localises to the host nucleolus. Functionally, secreted effector that promotes P.infestans colonization of plant host. Specifically suppresses Avr4/Cf4- and AvrPto/Pto-triggered cell death. Targets the potato MAP3Kbeta2 kinase, a positive regulator of cell death associated with plant immunity, and perturbs signaling pathways triggered by MAP3Kbeta2. The sequence is that of Secreted RxLR effector protein PITG_22926 from Phytophthora infestans (strain T30-4) (Potato late blight agent).